A 331-amino-acid polypeptide reads, in one-letter code: Ribose-phosphate pyrophosphokinase (331 aa).

D55–E57 lines the ATP pocket. Positions 148 and 187 each coordinate Mg(2+). The active site involves K211. D-ribose 5-phosphate-binding positions include R213, D237, and D241 to T245.

This sequence belongs to the ribose-phosphate pyrophosphokinase family. Class I subfamily. In terms of assembly, homohexamer. The cofactor is Mg(2+).

It is found in the cytoplasm. It carries out the reaction D-ribose 5-phosphate + ATP = 5-phospho-alpha-D-ribose 1-diphosphate + AMP + H(+). It participates in metabolic intermediate biosynthesis; 5-phospho-alpha-D-ribose 1-diphosphate biosynthesis; 5-phospho-alpha-D-ribose 1-diphosphate from D-ribose 5-phosphate (route I): step 1/1. Functionally, involved in the biosynthesis of the central metabolite phospho-alpha-D-ribosyl-1-pyrophosphate (PRPP) via the transfer of pyrophosphoryl group from ATP to 1-hydroxyl of ribose-5-phosphate (Rib-5-P). The polypeptide is Ribose-phosphate pyrophosphokinase (Synechococcus elongatus (strain ATCC 33912 / PCC 7942 / FACHB-805) (Anacystis nidulans R2)).